We begin with the raw amino-acid sequence, 205 residues long: Small ribosomal subunit protein uS4 (205 aa).

A disordered region spans residues 1–49 (MSKRQSAKYKLDRRMGENIWGRPKSPVNRREYGPGQHGQRRKGKLSDFG). The S4 RNA-binding domain maps to 94–157 (SRLDAIVFRA…KQLTVVLESV (64 aa)).

The protein belongs to the universal ribosomal protein uS4 family. In terms of assembly, part of the 30S ribosomal subunit. Contacts protein S5. The interaction surface between S4 and S5 is involved in control of translational fidelity.

Its function is as follows. One of the primary rRNA binding proteins, it binds directly to 16S rRNA where it nucleates assembly of the body of the 30S subunit. Functionally, with S5 and S12 plays an important role in translational accuracy. The polypeptide is Small ribosomal subunit protein uS4 (Chelativorans sp. (strain BNC1)).